We begin with the raw amino-acid sequence, 167 residues long: Minor fimbrial protein PrsF (167 aa).

The signal sequence occupies residues 1–18 (MIRLSLFISLLLTSVAVL).

The protein resides in the secreted. It localises to the fimbrium. In terms of biological role, fimbriae (also called pili), polar filaments radiating from the surface of the bacterium to a length of 0.5-1.5 micrometers and numbering 100-300 per cell, enable bacteria to colonize the epithelium of specific host organs. This is Minor fimbrial protein PrsF (prsF) from Escherichia coli.